Consider the following 97-residue polypeptide: MIKKDRFTNEKLNKLFDSPFSLVNYAIKQAKIKIAKGDVRSSNVAIETLVLLDREGIQPEFTEEIVVTASPTVERKRSEHTNSRKKDPSAYTWSDVK.

Residues 72 to 97 (TVERKRSEHTNSRKKDPSAYTWSDVK) form a disordered region. Residues 73–88 (VERKRSEHTNSRKKDP) are compositionally biased toward basic and acidic residues.

Belongs to the chlamydial CPn_0121/CT_031/TC_0300 family.

This is an uncharacterized protein from Chlamydia pneumoniae (Chlamydophila pneumoniae).